Here is a 130-residue protein sequence, read N- to C-terminus: MKFIYKLLFILSIVLFLFNNIITINGEIEEVEEINDECSGVRCDKVDKLLCLTSHRPVARYIDRKMAKEKNVLLCCPICLIPSTSFCNHSTSSLHDPKLKYLSGNVYTCYDGEKECNLHTNECEILPQYR.

Residues methionine 1–glycine 26 form the signal peptide. Asparagine 88 is a glycosylation site (N-linked (GlcNAc...) asparagine).

It localises to the secreted. This is an uncharacterized protein from Dictyostelium discoideum (Social amoeba).